The chain runs to 303 residues: Imidazoleglycerol-phosphate dehydratase (303 aa).

Belongs to the imidazoleglycerol-phosphate dehydratase family.

The protein localises to the cytoplasm. It catalyses the reaction D-erythro-1-(imidazol-4-yl)glycerol 3-phosphate = 3-(imidazol-4-yl)-2-oxopropyl phosphate + H2O. The protein operates within amino-acid biosynthesis; L-histidine biosynthesis; L-histidine from 5-phospho-alpha-D-ribose 1-diphosphate: step 6/9. The polypeptide is Imidazoleglycerol-phosphate dehydratase (Neisseria gonorrhoeae (strain ATCC 700825 / FA 1090)).